The primary structure comprises 61 residues: Large ribosomal subunit protein bL33 (61 aa).

It belongs to the bacterial ribosomal protein bL33 family.

The sequence is that of Large ribosomal subunit protein bL33 from Amoebophilus asiaticus (strain 5a2).